A 435-amino-acid chain; its full sequence is Methionine aminopeptidase 2 (435 aa).

Residues 57 to 77 are disordered; it reads AIDGDQAAAKKKKSKKKKKKA. The segment covering 65–77 has biased composition (basic residues); the sequence is AKKKKSKKKKKKA. H188 lines the substrate pocket. D208, D219, and H288 together coordinate a divalent metal cation. H296 is a substrate binding site. E321 and E416 together coordinate a divalent metal cation.

This sequence belongs to the peptidase M24A family. Methionine aminopeptidase eukaryotic type 2 subfamily. Co(2+) is required as a cofactor. Zn(2+) serves as cofactor. The cofactor is Mn(2+). It depends on Fe(2+) as a cofactor.

It localises to the cytoplasm. The enzyme catalyses Release of N-terminal amino acids, preferentially methionine, from peptides and arylamides.. Functionally, cotranslationally removes the N-terminal methionine from nascent proteins. The N-terminal methionine is often cleaved when the second residue in the primary sequence is small and uncharged (Met-Ala-, Cys, Gly, Pro, Ser, Thr, or Val). This chain is Methionine aminopeptidase 2, found in Clavispora lusitaniae (strain ATCC 42720) (Yeast).